Consider the following 620-residue polypeptide: Glutathione-regulated potassium-efflux system protein KefC (620 aa).

12 helical membrane passes run 4 to 24, 26 to 46, 54 to 74, 90 to 110, 114 to 134, 149 to 169, 178 to 198, 218 to 238, 270 to 290, 294 to 314, 327 to 347, and 359 to 379; these read HTLI…PIAV, LGLG…PWGL, SILH…GLEL, GALQ…LLGL, VAEL…MQAM, FAVL…IPLL, MGAF…VVLL, VFSA…EEVG, GLLL…GTLL, LRIV…LWLI, WFAV…GAAQ, and SLTL…VILN. Positions 399–518 constitute an RCK N-terminal domain; the sequence is QPRVIIAGFG…AGVEKPERET (120 aa). The interval 597-620 is disordered; it reads GWQGTEEGKHTGNMADEPETKPSS.

Belongs to the monovalent cation:proton antiporter 2 (CPA2) transporter (TC 2.A.37) family. KefC subfamily. In terms of assembly, homodimer. Interacts with the regulatory subunit KefF.

It is found in the cell inner membrane. Pore-forming subunit of a potassium efflux system that confers protection against electrophiles. Catalyzes K(+)/H(+) antiport. In Escherichia coli O8 (strain IAI1), this protein is Glutathione-regulated potassium-efflux system protein KefC.